The primary structure comprises 65 residues: Kappa-scoloptoxin(04)-Ssd1a (65 aa).

The first 24 residues, 1-24 (MKKTCVVSVFLVLLLLKFHDLSMG), serve as a signal peptide directing secretion. Positions 25–36 (EEISPLKKVAPR) are excised as a propeptide. 2 cysteine pairs are disulfide-bonded: Cys-42/Cys-53 and Cys-47/Cys-60.

Expressed by the venom gland.

It is found in the secreted. Its function is as follows. Voltage-gated potassium channel inhibitor. This Scolopendra dehaani (Thai centipede) protein is Kappa-scoloptoxin(04)-Ssd1a.